Here is a 148-residue protein sequence, read N- to C-terminus: Large ribosomal subunit protein bL9 (148 aa).

This sequence belongs to the bacterial ribosomal protein bL9 family.

Functionally, binds to the 23S rRNA. The protein is Large ribosomal subunit protein bL9 of Chromohalobacter salexigens (strain ATCC BAA-138 / DSM 3043 / CIP 106854 / NCIMB 13768 / 1H11).